An 81-amino-acid chain; its full sequence is Photosystem I iron-sulfur center (81 aa).

4Fe-4S ferredoxin-type domains are found at residues 2 to 31 (SHSVKVYDTCIGCTQCVRACPCDVLEMVAW) and 39 to 68 (IASAPRTEDCIGCKRCETACPTDFLSVRVY). [4Fe-4S] cluster is bound by residues Cys11, Cys14, Cys17, Cys21, Cys48, Cys51, Cys54, and Cys58.

In terms of assembly, the eukaryotic PSI reaction center is composed of at least 11 subunits. [4Fe-4S] cluster is required as a cofactor.

It localises to the plastid. Its subcellular location is the chloroplast thylakoid membrane. The catalysed reaction is reduced [plastocyanin] + hnu + oxidized [2Fe-2S]-[ferredoxin] = oxidized [plastocyanin] + reduced [2Fe-2S]-[ferredoxin]. In terms of biological role, apoprotein for the two 4Fe-4S centers FA and FB of photosystem I (PSI); essential for photochemical activity. FB is the terminal electron acceptor of PSI, donating electrons to ferredoxin. The C-terminus interacts with PsaA/B/D and helps assemble the protein into the PSI complex. Required for binding of PsaD and PsaE to PSI. PSI is a plastocyanin/cytochrome c6-ferredoxin oxidoreductase, converting photonic excitation into a charge separation, which transfers an electron from the donor P700 chlorophyll pair to the spectroscopically characterized acceptors A0, A1, FX, FA and FB in turn. The sequence is that of Photosystem I iron-sulfur center from Guillardia theta (Cryptophyte).